The primary structure comprises 338 residues: Dodecaprenyl-phosphate galacturonate synthase (338 aa).

Helical transmembrane passes span 254 to 274 and 289 to 309; these read FFGS…LYLG and MLMV…TGIL.

It belongs to the glycosyltransferase 2 family.

The protein localises to the cell membrane. The enzyme catalyses di-trans,nona-cis-dodecaprenyl phosphate + UDP-alpha-D-galacturonate = beta-D-galacturonosyl di-trans,nona-cis-dodecaprenyl phosphate + UDP. Functionally, glycosyltransferase that catalyzes the synthesis of dodecaprenyl-phosphate galacturonate (Dod-P-GalA), likely from UDP-GalA and dodecaprenyl-phosphate. Dod-P-GalA is the lipid donor required for GalA transfer to lipopolysaccharide (LPS) specific residues catalyzed by the GalA transferases RgtA, RgtB, RgtC and RgtD. The sequence is that of Dodecaprenyl-phosphate galacturonate synthase from Rhizobium johnstonii (strain DSM 114642 / LMG 32736 / 3841) (Rhizobium leguminosarum bv. viciae).